The following is a 292-amino-acid chain: 4-hydroxy-tetrahydrodipicolinate synthase (292 aa).

Thr-45 contacts pyruvate. Tyr-133 functions as the Proton donor/acceptor in the catalytic mechanism. Lys-161 acts as the Schiff-base intermediate with substrate in catalysis. Ile-203 is a pyruvate binding site.

Belongs to the DapA family. Homotetramer; dimer of dimers.

It is found in the cytoplasm. The enzyme catalyses L-aspartate 4-semialdehyde + pyruvate = (2S,4S)-4-hydroxy-2,3,4,5-tetrahydrodipicolinate + H2O + H(+). Its pathway is amino-acid biosynthesis; L-lysine biosynthesis via DAP pathway; (S)-tetrahydrodipicolinate from L-aspartate: step 3/4. Catalyzes the condensation of (S)-aspartate-beta-semialdehyde [(S)-ASA] and pyruvate to 4-hydroxy-tetrahydrodipicolinate (HTPA). This is 4-hydroxy-tetrahydrodipicolinate synthase from Shigella flexneri.